The primary structure comprises 69 residues: MVVNLILLLGLLGGYLLVMPAITYFYLQKRWYVASSLERGFMYFLVFFFFPSLLLLSPFLNFRPQPRKI.

2 consecutive transmembrane segments (helical) span residues leucine 5–phenylalanine 25 and glycine 40–leucine 60.

This sequence belongs to the complex I NdhL subunit family. NDH-1 can be composed of about 15 different subunits; different subcomplexes with different compositions have been identified which probably have different functions.

It localises to the cellular thylakoid membrane. It catalyses the reaction a plastoquinone + NADH + (n+1) H(+)(in) = a plastoquinol + NAD(+) + n H(+)(out). It carries out the reaction a plastoquinone + NADPH + (n+1) H(+)(in) = a plastoquinol + NADP(+) + n H(+)(out). Functionally, NDH-1 shuttles electrons from an unknown electron donor, via FMN and iron-sulfur (Fe-S) centers, to quinones in the respiratory and/or the photosynthetic chain. The immediate electron acceptor for the enzyme in this species is believed to be plastoquinone. Couples the redox reaction to proton translocation, and thus conserves the redox energy in a proton gradient. Cyanobacterial NDH-1 also plays a role in inorganic carbon-concentration. This is NAD(P)H-quinone oxidoreductase subunit L from Acaryochloris marina (strain MBIC 11017).